A 227-amino-acid polypeptide reads, in one-letter code: MLVHIPNVLTPEQVSMVRDRLDRAGDAWVDGRATAGYTGAPVKRNQQIAEHSPIARELGDVILAALERNPLFISAALPNQVYPPLFNRYEGGMTFGSHVDGAVRVLPNGVKLRTDVSVTLFLSAPDEYDGGELVIEDAYGVQQVKLPAGDMIVYPATSLHQVTPVTRGVRVASFFWVQSLVRSDAQRALLFDMDTAIQRLNASGADTDACRSLVGCYHNLLRIWSET.

In terms of domain architecture, Fe2OG dioxygenase spans 80–179 (QVYPPLFNRY…RVASFFWVQS (100 aa)). 3 residues coordinate Fe cation: His98, Asp100, and His160. Arg170 serves as a coordination point for 2-oxoglutarate.

Fe(2+) is required as a cofactor. It depends on L-ascorbate as a cofactor.

This is PKHD-type hydroxylase Bamb_4479 from Burkholderia ambifaria (strain ATCC BAA-244 / DSM 16087 / CCUG 44356 / LMG 19182 / AMMD) (Burkholderia cepacia (strain AMMD)).